Reading from the N-terminus, the 207-residue chain is Thymidylate kinase (207 aa).

An ATP-binding site is contributed by 7–14 (GPEGAGKS).

This sequence belongs to the thymidylate kinase family.

The catalysed reaction is dTMP + ATP = dTDP + ADP. Phosphorylation of dTMP to form dTDP in both de novo and salvage pathways of dTTP synthesis. The protein is Thymidylate kinase of Pseudomonas putida (strain W619).